The following is a 388-amino-acid chain: L-arabinitol 4-dehydrogenase (388 aa).

Zn(2+)-binding residues include cysteine 55, histidine 80, glutamate 81, cysteine 110, cysteine 113, cysteine 116, cysteine 124, and glutamate 165. Residues proline 192–isoleucine 193, aspartate 213, arginine 218, isoleucine 293, and glutamine 317–arginine 319 each bind NAD(+).

The protein belongs to the zinc-containing alcohol dehydrogenase family. In terms of assembly, homotetramer. Zn(2+) serves as cofactor.

It catalyses the reaction L-arabinitol + NAD(+) = L-xylulose + NADH + H(+). Its pathway is carbohydrate degradation; L-arabinose degradation via L-arabinitol; D-xylulose 5-phosphate from L-arabinose (fungal route): step 2/5. Functionally, catalyzes the NAD-dependent oxidation of L-arabinitol to L-xylulose in the fungal L-arabinose catabolic pathway. L-arabinose catabolism is important for using plant material as a carbon source. NADP cannot act as a cosubstrate. The polypeptide is L-arabinitol 4-dehydrogenase (lad) (Talaromyces emersonii (Thermophilic fungus)).